A 289-amino-acid polypeptide reads, in one-letter code: F-actin-capping protein subunit beta (289 aa).

A disordered region spans residues 73-110; the sequence is RSPWSNQFDPPLEGGNQGGSGGDGEGDGGEGGAAGSIM. The span at 87–106 shows a compositional bias: gly residues; the sequence is GNQGGSGGDGEGDGGEGGAA.

Belongs to the F-actin-capping protein beta subunit family. As to quaternary structure, component of the F-actin capping complex, composed of a heterodimer of an alpha and a beta subunit.

Its subcellular location is the cytoplasm. The protein localises to the cytoskeleton. It localises to the actin patch. In terms of biological role, F-actin-capping proteins bind in a Ca(2+)-independent manner to the fast growing ends of actin filaments (barbed end) thereby blocking the exchange of subunits at these ends. Unlike other capping proteins (such as gelsolin and severin), these proteins do not sever actin filaments. The protein is F-actin-capping protein subunit beta (fac-2) of Neurospora crassa (strain ATCC 24698 / 74-OR23-1A / CBS 708.71 / DSM 1257 / FGSC 987).